A 234-amino-acid polypeptide reads, in one-letter code: Riboflavin kinase (234 aa).

Residues 1–98 form an H-T-H motif-like region; sequence MAESTTAVGH…QEIFGDNSSV (98 aa). Residues 99 to 234 form a riboflavin kinase region; the sequence is VELTGTVTSG…RITVQLKPKE (136 aa). 108–113 provides a ligand contact to CDP; it reads GMGEGR. Residues threonine 137 and asparagine 139 each contribute to the Mg(2+) site. FMN is bound by residues threonine 199 and glutamate 207. 212–215 contributes to the CDP binding site; the sequence is ERLR.

The protein belongs to the archaeal riboflavin kinase family. Requires Mg(2+) as cofactor.

It catalyses the reaction riboflavin + CTP = CDP + FMN + H(+). Its pathway is cofactor biosynthesis; FMN biosynthesis; FMN from riboflavin (CTP route): step 1/1. Catalyzes the CTP-dependent phosphorylation of riboflavin (vitamin B2) to form flavin mononucleotide (FMN). The polypeptide is Riboflavin kinase (ribK) (Haloquadratum walsbyi (strain DSM 16790 / HBSQ001)).